The primary structure comprises 464 residues: Aspartyl protease 37 (464 aa).

The first 19 residues, 1 to 19 (MNAAVLLLLLALAALPASC), serve as a signal peptide directing secretion. N-linked (GlcNAc...) asparagine glycosylation occurs at asparagine 41. The Peptidase A1 domain occupies 89-456 (YLVKLGIGTP…NLRRGRVTFV (368 aa)). Aspartate 107 is an active-site residue. Cysteine 117 and cysteine 123 are joined by a disulfide. Residues asparagine 174 and asparagine 261 are each glycosylated (N-linked (GlcNAc...) asparagine). Low complexity predominate over residues 299–311 (TTTTTATATATAP). The disordered stretch occupies residues 299–319 (TTTTTATATATAPAPAPTPSP). An N-linked (GlcNAc...) asparagine glycan is attached at asparagine 320. Residue aspartate 337 is part of the active site. A disulfide bridge links cysteine 376 with cysteine 420.

The protein belongs to the peptidase A1 family.

Functionally, anther-specific aspartic protease involved in tapetal programmed cell death (PCD). Directly regulated by the transcription factor EAT1/DTD in anthers during tapetum PCD and degeneration. The sequence is that of Aspartyl protease 37 from Oryza sativa subsp. japonica (Rice).